We begin with the raw amino-acid sequence, 348 residues long: Noscapine synthase SDR1 (348 aa).

This sequence belongs to the NAD(P)-dependent epimerase/dehydratase family.

It catalyses the reaction narcotine hemiacetal + NAD(+) = noscapine + NADH + H(+). The protein operates within alkaloid biosynthesis. In terms of biological role, oxidoreductase that catalyzes the last step in the biosynthesis of the benzylisoquinoline alkaloid noscapine. Converts narcotine hemiacetal to noscapine. The polypeptide is Noscapine synthase SDR1 (Papaver somniferum (Opium poppy)).